A 199-amino-acid polypeptide reads, in one-letter code: Pyridoxine/pyridoxamine 5'-phosphate oxidase (199 aa).

FMN is bound by residues 44–49 (RTVLLK), 59–60 (YT), lysine 66, and glutamine 91. Residue lysine 49 coordinates substrate. Substrate contacts are provided by tyrosine 109, arginine 113, and serine 117. FMN contacts are provided by residues 126–127 (QS) and tryptophan 171. 177–179 (RLH) contributes to the substrate binding site. Arginine 181 provides a ligand contact to FMN.

Belongs to the pyridoxamine 5'-phosphate oxidase family. As to quaternary structure, homodimer. The cofactor is FMN.

The enzyme catalyses pyridoxamine 5'-phosphate + O2 + H2O = pyridoxal 5'-phosphate + H2O2 + NH4(+). It catalyses the reaction pyridoxine 5'-phosphate + O2 = pyridoxal 5'-phosphate + H2O2. It participates in cofactor metabolism; pyridoxal 5'-phosphate salvage; pyridoxal 5'-phosphate from pyridoxamine 5'-phosphate: step 1/1. The protein operates within cofactor metabolism; pyridoxal 5'-phosphate salvage; pyridoxal 5'-phosphate from pyridoxine 5'-phosphate: step 1/1. In terms of biological role, catalyzes the oxidation of either pyridoxine 5'-phosphate (PNP) or pyridoxamine 5'-phosphate (PMP) into pyridoxal 5'-phosphate (PLP). In Xanthomonas campestris pv. campestris (strain 8004), this protein is Pyridoxine/pyridoxamine 5'-phosphate oxidase.